Reading from the N-terminus, the 600-residue chain is DNA mismatch repair protein MutL (600 aa).

The protein belongs to the DNA mismatch repair MutL/HexB family.

This protein is involved in the repair of mismatches in DNA. It is required for dam-dependent methyl-directed DNA mismatch repair. May act as a 'molecular matchmaker', a protein that promotes the formation of a stable complex between two or more DNA-binding proteins in an ATP-dependent manner without itself being part of a final effector complex. This chain is DNA mismatch repair protein MutL, found in Rickettsia typhi (strain ATCC VR-144 / Wilmington).